We begin with the raw amino-acid sequence, 284 residues long: 2-dehydro-3-deoxyphosphooctonate aldolase (284 aa).

This sequence belongs to the KdsA family.

It is found in the cytoplasm. It carries out the reaction D-arabinose 5-phosphate + phosphoenolpyruvate + H2O = 3-deoxy-alpha-D-manno-2-octulosonate-8-phosphate + phosphate. The protein operates within carbohydrate biosynthesis; 3-deoxy-D-manno-octulosonate biosynthesis; 3-deoxy-D-manno-octulosonate from D-ribulose 5-phosphate: step 2/3. Its pathway is bacterial outer membrane biogenesis; lipopolysaccharide biosynthesis. The polypeptide is 2-dehydro-3-deoxyphosphooctonate aldolase (Yersinia pseudotuberculosis serotype O:1b (strain IP 31758)).